Consider the following 337-residue polypeptide: Anthranilate phosphoribosyltransferase (337 aa).

5-phospho-alpha-D-ribose 1-diphosphate contacts are provided by residues glycine 81, 84 to 85 (GD), serine 89, 91 to 94 (NVST), 109 to 117 (KHGNRAATS), and alanine 121. Glycine 81 lines the anthranilate pocket. Residue serine 93 coordinates Mg(2+). Asparagine 112 is an anthranilate binding site. Position 167 (arginine 167) interacts with anthranilate. Residues aspartate 226 and glutamate 227 each coordinate Mg(2+).

It belongs to the anthranilate phosphoribosyltransferase family. As to quaternary structure, homodimer. The cofactor is Mg(2+).

It carries out the reaction N-(5-phospho-beta-D-ribosyl)anthranilate + diphosphate = 5-phospho-alpha-D-ribose 1-diphosphate + anthranilate. It participates in amino-acid biosynthesis; L-tryptophan biosynthesis; L-tryptophan from chorismate: step 2/5. Its function is as follows. Catalyzes the transfer of the phosphoribosyl group of 5-phosphorylribose-1-pyrophosphate (PRPP) to anthranilate to yield N-(5'-phosphoribosyl)-anthranilate (PRA). This Methylorubrum populi (strain ATCC BAA-705 / NCIMB 13946 / BJ001) (Methylobacterium populi) protein is Anthranilate phosphoribosyltransferase.